Here is a 500-residue protein sequence, read N- to C-terminus: Probable malate:quinone oxidoreductase (500 aa).

Belongs to the MQO family. Requires FAD as cofactor.

The catalysed reaction is (S)-malate + a quinone = a quinol + oxaloacetate. Its pathway is carbohydrate metabolism; tricarboxylic acid cycle; oxaloacetate from (S)-malate (quinone route): step 1/1. The polypeptide is Probable malate:quinone oxidoreductase (Bordetella avium (strain 197N)).